A 404-amino-acid chain; its full sequence is Glucose-1-phosphate adenylyltransferase (404 aa).

Alpha-D-glucose 1-phosphate contacts are provided by residues Tyr99, Gly164, 179-180, and Ser197; that span reads EK.

Belongs to the bacterial/plant glucose-1-phosphate adenylyltransferase family. In terms of assembly, homotetramer.

It carries out the reaction alpha-D-glucose 1-phosphate + ATP + H(+) = ADP-alpha-D-glucose + diphosphate. It functions in the pathway glycan biosynthesis; glycogen biosynthesis. Involved in the biosynthesis of ADP-glucose, a building block required for the elongation reactions to produce glycogen. Catalyzes the reaction between ATP and alpha-D-glucose 1-phosphate (G1P) to produce pyrophosphate and ADP-Glc. This chain is Glucose-1-phosphate adenylyltransferase, found in Rhodococcus erythropolis (strain PR4 / NBRC 100887).